Here is a 112-residue protein sequence, read N- to C-terminus: Putative pterin-4-alpha-carbinolamine dehydratase (112 aa).

It belongs to the pterin-4-alpha-carbinolamine dehydratase family.

The enzyme catalyses (4aS,6R)-4a-hydroxy-L-erythro-5,6,7,8-tetrahydrobiopterin = (6R)-L-erythro-6,7-dihydrobiopterin + H2O. This chain is Putative pterin-4-alpha-carbinolamine dehydratase, found in Shewanella loihica (strain ATCC BAA-1088 / PV-4).